A 138-amino-acid polypeptide reads, in one-letter code: Large ribosomal subunit protein uL16 (138 aa).

Belongs to the universal ribosomal protein uL16 family. As to quaternary structure, part of the 50S ribosomal subunit.

In terms of biological role, binds 23S rRNA and is also seen to make contacts with the A and possibly P site tRNAs. This Acholeplasma laidlawii (strain PG-8A) protein is Large ribosomal subunit protein uL16.